A 64-amino-acid chain; its full sequence is Large ribosomal subunit protein bL35 (64 aa).

The span at 1–14 shows a compositional bias: basic residues; it reads MKNKTHKGTAKRVK. The tract at residues 1–29 is disordered; that stretch reads MKNKTHKGTAKRVKVTGSGKLVREQANRR.

It belongs to the bacterial ribosomal protein bL35 family.

The polypeptide is Large ribosomal subunit protein bL35 (Corynebacterium glutamicum (strain R)).